A 353-amino-acid chain; its full sequence is Uroporphyrinogen decarboxylase (353 aa).

Substrate-binding positions include 35–39 (RQAGR), Phe54, Asp84, Tyr160, Ser215, and His329.

The protein belongs to the uroporphyrinogen decarboxylase family. In terms of assembly, homodimer.

It is found in the cytoplasm. It catalyses the reaction uroporphyrinogen III + 4 H(+) = coproporphyrinogen III + 4 CO2. It functions in the pathway porphyrin-containing compound metabolism; protoporphyrin-IX biosynthesis; coproporphyrinogen-III from 5-aminolevulinate: step 4/4. Catalyzes the decarboxylation of four acetate groups of uroporphyrinogen-III to yield coproporphyrinogen-III. This chain is Uroporphyrinogen decarboxylase, found in Staphylococcus epidermidis (strain ATCC 12228 / FDA PCI 1200).